Here is a 102-residue protein sequence, read N- to C-terminus: MAGQKIRIRLKSYDHEVIDQSAKKIVETVTNAGATVVGPVPLPTEKNVFCVIRSPHMYKDSREHFEMRTHKRLIDIVDPTPKAVDSLMHIDLPADVNIEIKL.

Belongs to the universal ribosomal protein uS10 family. Part of the 30S ribosomal subunit.

Its function is as follows. Involved in the binding of tRNA to the ribosomes. This Bifidobacterium longum subsp. infantis (strain ATCC 15697 / DSM 20088 / JCM 1222 / NCTC 11817 / S12) protein is Small ribosomal subunit protein uS10.